The sequence spans 131 residues: Maturin (131 aa).

Y34 carries the phosphotyrosine modification. Residues 107 to 120 are compositionally biased toward acidic residues; that stretch reads FEEYSADVEEEEPE. The segment at 107–131 is disordered; it reads FEEYSADVEEEEPEADHPQMGVSQQ.

Belongs to the MTURN family. Post-translationally, phosphorylation at Tyr-34 is essential for its ability to promote megakaryocyte differentiation.

It is found in the cytoplasm. Promotes megakaryocyte differentiation by enhancing ERK and JNK signaling as well as up-regulating RUNX1 and FLI1 expression. Represses NF-kappa-B transcriptional activity by inhibiting phosphorylation of RELA at 'Ser- 536'. May be involved in early neuronal development. This is Maturin (MTURN) from Bos taurus (Bovine).